Consider the following 338-residue polypeptide: Glutamate/glutamine/aspartate/asparagine-binding protein BztA (338 aa).

The first 22 residues, 1–22 (MKKSAFFGSVALAALVAGAASA), serve as a signal peptide directing secretion.

The protein belongs to the bacterial solute-binding protein 3 family.

It localises to the periplasm. Part of a binding-protein-dependent transport system for glutamate, glutamine, aspartate and asparagine. In Rhodobacter capsulatus (strain ATCC BAA-309 / NBRC 16581 / SB1003), this protein is Glutamate/glutamine/aspartate/asparagine-binding protein BztA (bztA).